Here is a 105-residue protein sequence, read N- to C-terminus: Pyrimidine/purine nucleoside phosphorylase (105 aa).

It belongs to the nucleoside phosphorylase PpnP family.

The catalysed reaction is a purine D-ribonucleoside + phosphate = a purine nucleobase + alpha-D-ribose 1-phosphate. It catalyses the reaction adenosine + phosphate = alpha-D-ribose 1-phosphate + adenine. It carries out the reaction cytidine + phosphate = cytosine + alpha-D-ribose 1-phosphate. The enzyme catalyses guanosine + phosphate = alpha-D-ribose 1-phosphate + guanine. The catalysed reaction is inosine + phosphate = alpha-D-ribose 1-phosphate + hypoxanthine. It catalyses the reaction thymidine + phosphate = 2-deoxy-alpha-D-ribose 1-phosphate + thymine. It carries out the reaction uridine + phosphate = alpha-D-ribose 1-phosphate + uracil. The enzyme catalyses xanthosine + phosphate = alpha-D-ribose 1-phosphate + xanthine. In terms of biological role, catalyzes the phosphorolysis of diverse nucleosides, yielding D-ribose 1-phosphate and the respective free bases. Can use uridine, adenosine, guanosine, cytidine, thymidine, inosine and xanthosine as substrates. Also catalyzes the reverse reactions. The sequence is that of Pyrimidine/purine nucleoside phosphorylase from Delftia acidovorans (strain DSM 14801 / SPH-1).